The chain runs to 298 residues: Junctional adhesion molecule A (298 aa).

The first 28 residues, 1 to 28, serve as a signal peptide directing secretion; sequence MGTEARAGRRQLLVFTSVVLSSLALGRG. Ig-like V-type domains lie at 29–126 and 134–227; these read AVYT…VQLT and PTVH…EAVR. Residues 29 to 237 lie on the Extracellular side of the membrane; that stretch reads AVYTSEPDVR…MEAAELNVGG (209 aa). Disulfide bonds link Cys49–Cys108 and Cys152–Cys211. N-linked (GlcNAc...) asparagine glycosylation is present at Asn184. The helical transmembrane segment at 238–258 threads the bilayer; the sequence is IVAAVLVTLILLGFLILGIWF. The Cytoplasmic portion of the chain corresponds to 259–298; that stretch reads AYRRGYFDRTKKGTSSKKVIYSQPAARSEGEFRQTSSFLV. 2 positions are modified to phosphoserine: Ser280 and Ser286.

This sequence belongs to the immunoglobulin superfamily. In terms of assembly, interacts with the ninth PDZ domain of MPDZ. Interacts with the first PDZ domain of PARD3. The association between PARD3 and PARD6B probably disrupts this interaction. Interacts with ITGAL (via I-domain). Interacts with CD151. As to quaternary structure, (Microbial infection) Interacts with calicivirus capsid protein. (Microbial infection) Interacts with the orthoreovirus sigma-1 capsid protein.

The protein resides in the cell junction. It localises to the tight junction. The protein localises to the cell membrane. Seems to play a role in epithelial tight junction formation. Appears early in primordial forms of cell junctions and recruits PARD3. The association of the PARD6-PARD3 complex may prevent the interaction of PARD3 with JAM1, thereby preventing tight junction assembly. Plays a role in regulating monocyte transmigration involved in integrity of epithelial barrier. Ligand for integrin alpha-L/beta-2 involved in memory T-cell and neutrophil transmigration. Involved in platelet activation. Functionally, (Microbial infection) Acts as a functional receptor for murine norovirus. Its function is as follows. (Microbial infection) In case of orthoreovirus infection, serves as receptor for the virus. This chain is Junctional adhesion molecule A (F11R), found in Felis catus (Cat).